The chain runs to 339 residues: Serine/arginine-rich splicing factor 6 (339 aa).

Positions 2 to 72 (PRVYIGRLSY…ERVIVEHARG (71 aa)) constitute an RRM 1 domain. A phosphoserine mark is found at serine 45, serine 81, and serine 84. The interval 75-103 (RDRDGYSYGSRSGGGGYSSRRTSGRDKYG) is disordered. Residues 110–183 (YRLIVENLSS…RNIRLIEDKP (74 aa)) form the RRM 2 domain. N6-acetyllysine is present on lysine 165. The disordered stretch occupies residues 176-339 (IRLIEDKPRT…RSRSRSSSRD (164 aa)). Lysine 182 participates in a covalent cross-link: Glycyl lysine isopeptide (Lys-Gly) (interchain with G-Cter in SUMO2). Basic residues predominate over residues 185–250 (TSHRRSYSGS…RKSRSKSKSK (66 aa)). A compositionally biased stretch (basic and acidic residues) spans 280–291 (SPKENGKGDIKS). Phosphoserine occurs at positions 297 and 299. Serine 303 is modified (phosphoserine; by DYRK1A). Phosphoserine occurs at positions 314 and 316. The span at 321 to 339 (RASRSRSRSRSRSRSSSRD) shows a compositional bias: basic residues.

This sequence belongs to the splicing factor SR family. As to quaternary structure, binds SREK1/SFRS12. Interacts with DYRK1A. Interacts with RBMY; the interaction inhibits SRSF6 pre-mRNA splicing. Extensively phosphorylated on serine residues in the RS domain. Phosphorylated by DYRK1A, probably in the RS domain. Phosphorylation by DYRK1A modulates alternative splice site selection and inhibits the expression of MAPT/Tau exon 10.

It is found in the nucleus. The protein localises to the nucleus speckle. Functionally, plays a role in constitutive splicing and modulates the selection of alternative splice sites. Plays a role in the alternative splicing of MAPT/Tau exon 10. Binds to alternative exons of TNC pre-mRNA and promotes the expression of alternatively spliced TNC. Plays a role in wound healing and in the regulation of keratinocyte differentiation and proliferation via its role in alternative splicing. The sequence is that of Serine/arginine-rich splicing factor 6 (Srsf6) from Mus musculus (Mouse).